A 374-amino-acid chain; its full sequence is 4-hydroxy-3-methylbut-2-en-1-yl diphosphate synthase (flavodoxin) (374 aa).

Residues Cys-268, Cys-271, Cys-303, and Glu-310 each coordinate [4Fe-4S] cluster.

Belongs to the IspG family. The cofactor is [4Fe-4S] cluster.

The enzyme catalyses (2E)-4-hydroxy-3-methylbut-2-enyl diphosphate + oxidized [flavodoxin] + H2O + 2 H(+) = 2-C-methyl-D-erythritol 2,4-cyclic diphosphate + reduced [flavodoxin]. It functions in the pathway isoprenoid biosynthesis; isopentenyl diphosphate biosynthesis via DXP pathway; isopentenyl diphosphate from 1-deoxy-D-xylulose 5-phosphate: step 5/6. Converts 2C-methyl-D-erythritol 2,4-cyclodiphosphate (ME-2,4cPP) into 1-hydroxy-2-methyl-2-(E)-butenyl 4-diphosphate. The sequence is that of 4-hydroxy-3-methylbut-2-en-1-yl diphosphate synthase (flavodoxin) from Geobacillus kaustophilus (strain HTA426).